Reading from the N-terminus, the 217-residue chain is MLO-like protein (217 aa).

Helical transmembrane passes span 35–55, 59–79, and 119–139; these read FKVVVGISPILWFFAVLFLLS, GWVAYLWLPFIPLIIILVVGT, and LVLFLIHFCLFQNAFQLAFFI.

This sequence belongs to the MLO family.

Its subcellular location is the membrane. In terms of biological role, may be involved in modulation of pathogen defense and leaf cell death. In Linum usitatissimum (Flax), this protein is MLO-like protein.